The following is a 396-amino-acid chain: Ribosomal RNA large subunit methyltransferase I (396 aa).

The PUA domain occupies 2-81; it reads TVRLILAKGR…EVIDCAFFIR (80 aa).

The protein belongs to the methyltransferase superfamily. RlmI family.

The protein resides in the cytoplasm. It catalyses the reaction cytidine(1962) in 23S rRNA + S-adenosyl-L-methionine = 5-methylcytidine(1962) in 23S rRNA + S-adenosyl-L-homocysteine + H(+). Its function is as follows. Specifically methylates the cytosine at position 1962 (m5C1962) of 23S rRNA. In Yersinia pseudotuberculosis serotype O:1b (strain IP 31758), this protein is Ribosomal RNA large subunit methyltransferase I.